Reading from the N-terminus, the 353-residue chain is Ribosomal RNA large subunit methyltransferase M (353 aa).

S-adenosyl-L-methionine-binding positions include Ser179, 212-215, Asp231, Asp251, and Asp267; that span reads APGG. The active-site Proton acceptor is Lys296.

The protein belongs to the class I-like SAM-binding methyltransferase superfamily. RNA methyltransferase RlmE family. RlmM subfamily. As to quaternary structure, monomer.

The protein localises to the cytoplasm. It carries out the reaction cytidine(2498) in 23S rRNA + S-adenosyl-L-methionine = 2'-O-methylcytidine(2498) in 23S rRNA + S-adenosyl-L-homocysteine + H(+). In terms of biological role, catalyzes the 2'-O-methylation at nucleotide C2498 in 23S rRNA. In Laribacter hongkongensis (strain HLHK9), this protein is Ribosomal RNA large subunit methyltransferase M.